A 90-amino-acid chain; its full sequence is Defensin-like protein 193 (90 aa).

The signal sequence occupies residues Met-1–Ala-27. Cystine bridges form between Cys-32/Cys-86, Cys-45/Cys-69, Cys-54/Cys-81, and Cys-58/Cys-83.

The protein belongs to the DEFL family. Protease inhibitor I18 (RTI/MTI-2) subfamily.

The protein localises to the secreted. The sequence is that of Defensin-like protein 193 (ATTI2) from Arabidopsis thaliana (Mouse-ear cress).